The sequence spans 151 residues: 3-dehydroquinate dehydratase (151 aa).

Residue Y26 is the Proton acceptor of the active site. Positions 75, 81, and 88 each coordinate substrate. H101 (proton donor) is an active-site residue. Substrate contacts are provided by residues 102–103 (LS) and R112.

Belongs to the type-II 3-dehydroquinase family. In terms of assembly, homododecamer.

The enzyme catalyses 3-dehydroquinate = 3-dehydroshikimate + H2O. It functions in the pathway metabolic intermediate biosynthesis; chorismate biosynthesis; chorismate from D-erythrose 4-phosphate and phosphoenolpyruvate: step 3/7. Functionally, catalyzes a trans-dehydration via an enolate intermediate. The protein is 3-dehydroquinate dehydratase of Shewanella sediminis (strain HAW-EB3).